The chain runs to 179 residues: MATSTISAPSSVRNVILTGFMGTGKSSVGRLLAHRLGFRYCDLDALIVEGEGVSINEIFARHGEPHFRALETEAVRSVSREERCVVSTGGGAVISPENRCLLRKAGVVVNLTATVEEVCRRLREETDRPLLKDDRSGERIAAMMAEREQFYADAELRIDTTGKSVEDVVAEITGYLEGR.

Residue G22–S27 coordinates ATP. Residue S26 coordinates Mg(2+). 3 residues coordinate substrate: D44, R68, and G90. R128 contacts ATP. Substrate is bound at residue R147.

The protein belongs to the shikimate kinase family. As to quaternary structure, monomer. The cofactor is Mg(2+).

It is found in the cytoplasm. The catalysed reaction is shikimate + ATP = 3-phosphoshikimate + ADP + H(+). It participates in metabolic intermediate biosynthesis; chorismate biosynthesis; chorismate from D-erythrose 4-phosphate and phosphoenolpyruvate: step 5/7. Its function is as follows. Catalyzes the specific phosphorylation of the 3-hydroxyl group of shikimic acid using ATP as a cosubstrate. The polypeptide is Shikimate kinase (Geobacter metallireducens (strain ATCC 53774 / DSM 7210 / GS-15)).